A 242-amino-acid chain; its full sequence is Small ribosomal subunit protein uS2 (242 aa).

The protein belongs to the universal ribosomal protein uS2 family.

The protein is Small ribosomal subunit protein uS2 of Shewanella denitrificans (strain OS217 / ATCC BAA-1090 / DSM 15013).